The primary structure comprises 414 residues: Isocitrate dehydrogenase [NADP] cytoplasmic (414 aa).

Position 2 is an N-acetylserine (S2). Y42 is modified (phosphotyrosine). Residue 75–77 (TIT) participates in NADP(+) binding. A substrate-binding site is contributed by T77. N6-acetyllysine is present on K81. Residue R82 participates in NADP(+) binding. Substrate-binding positions include 94 to 100 (SPNGTIR) and R109. K126 carries the N6-succinyllysine modification. Substrate is bound by residues R132 and K212. N6-acetyllysine is present on residues K224, K233, and K243. D252 lines the Mn(2+) pocket. K260 contributes to the NADP(+) binding site. Mn(2+) is bound by residues D275 and D279. 310–315 (GTVTRH) lines the NADP(+) pocket. Position 321 is an N6-acetyllysine (K321). N328 serves as a coordination point for NADP(+). Residue S389 is modified to Phosphoserine. K400 bears the N6-succinyllysine mark.

Belongs to the isocitrate and isopropylmalate dehydrogenases family. As to quaternary structure, homodimer. Mg(2+) serves as cofactor. Requires Mn(2+) as cofactor. Acetylation at Lys-374 dramatically reduces catalytic activity.

The protein resides in the cytoplasm. Its subcellular location is the cytosol. The catalysed reaction is D-threo-isocitrate + NADP(+) = 2-oxoglutarate + CO2 + NADPH. Its function is as follows. Catalyzes the NADP(+)-dependent oxidative decarboxylation of isocitrate (D-threo-isocitrate) to 2-ketoglutarate (2-oxoglutarate), which is required by other enzymes such as the phytanoyl-CoA dioxygenase. Plays a critical role in the generation of NADPH, an important cofactor in many biosynthesis pathways. May act as a corneal epithelial crystallin and may be involved in maintaining corneal epithelial transparency. The sequence is that of Isocitrate dehydrogenase [NADP] cytoplasmic (IDH1) from Microtus ochrogaster (Prairie vole).